The following is a 41-amino-acid chain: SPbeta prophage-derived uncharacterized protein YosF (41 aa).

The chain is SPbeta prophage-derived uncharacterized protein YosF (yosF) from Bacillus subtilis (strain 168).